The chain runs to 334 residues: Holliday junction branch migration complex subunit RuvB (334 aa).

Residues 4 to 184 (ADRIISASPQ…FGIVQRLEFY (181 aa)) form a large ATPase domain (RuvB-L) region. Residues Ile-23, Arg-24, Gly-65, Lys-68, Thr-69, Thr-70, 131-133 (EDY), Arg-174, Tyr-184, and Arg-221 contribute to the ATP site. Residue Thr-69 coordinates Mg(2+). The interval 185–255 (NVDDLTSIVK…IAKQALVMLD (71 aa)) is small ATPAse domain (RuvB-S). Residues 258–334 (PQGFDFMDIK…YAHLGISLSE (77 aa)) are head domain (RuvB-H). The DNA site is built by Arg-294, Arg-313, and Arg-318.

The protein belongs to the RuvB family. As to quaternary structure, homohexamer. Forms an RuvA(8)-RuvB(12)-Holliday junction (HJ) complex. HJ DNA is sandwiched between 2 RuvA tetramers; dsDNA enters through RuvA and exits via RuvB. An RuvB hexamer assembles on each DNA strand where it exits the tetramer. Each RuvB hexamer is contacted by two RuvA subunits (via domain III) on 2 adjacent RuvB subunits; this complex drives branch migration. In the full resolvosome a probable DNA-RuvA(4)-RuvB(12)-RuvC(2) complex forms which resolves the HJ.

The protein localises to the cytoplasm. The catalysed reaction is ATP + H2O = ADP + phosphate + H(+). The RuvA-RuvB-RuvC complex processes Holliday junction (HJ) DNA during genetic recombination and DNA repair, while the RuvA-RuvB complex plays an important role in the rescue of blocked DNA replication forks via replication fork reversal (RFR). RuvA specifically binds to HJ cruciform DNA, conferring on it an open structure. The RuvB hexamer acts as an ATP-dependent pump, pulling dsDNA into and through the RuvAB complex. RuvB forms 2 homohexamers on either side of HJ DNA bound by 1 or 2 RuvA tetramers; 4 subunits per hexamer contact DNA at a time. Coordinated motions by a converter formed by DNA-disengaged RuvB subunits stimulates ATP hydrolysis and nucleotide exchange. Immobilization of the converter enables RuvB to convert the ATP-contained energy into a lever motion, pulling 2 nucleotides of DNA out of the RuvA tetramer per ATP hydrolyzed, thus driving DNA branch migration. The RuvB motors rotate together with the DNA substrate, which together with the progressing nucleotide cycle form the mechanistic basis for DNA recombination by continuous HJ branch migration. Branch migration allows RuvC to scan DNA until it finds its consensus sequence, where it cleaves and resolves cruciform DNA. In Haemophilus ducreyi (strain 35000HP / ATCC 700724), this protein is Holliday junction branch migration complex subunit RuvB.